The sequence spans 933 residues: Protein translocase subunit SecA (933 aa).

Residues Q87, 105-109, and D515 contribute to the ATP site; that span reads GEGKT. Disordered regions lie at residues 567 to 588, 840 to 861, and 880 to 933; these read ESRR…PGSS, DVEA…RHAA, and AAAE…CGKL. Positions 845 to 856 are enriched in basic and acidic residues; the sequence is EEQRRQEAERMQ. Over residues 880–897 the composition is skewed to low complexity; that stretch reads AAAEGDSAPTGGAQQQSA. A compositionally biased stretch (basic and acidic residues) spans 905–914; the sequence is VAREGPKVGR. Residues C918, C920, C929, and C930 each contribute to the Zn(2+) site. Residues 924–933 are compositionally biased toward basic residues; sequence KKYKHCCGKL.

The protein belongs to the SecA family. Monomer and homodimer. Part of the essential Sec protein translocation apparatus which comprises SecA, SecYEG and auxiliary proteins SecDF-YajC and YidC. Requires Zn(2+) as cofactor.

The protein resides in the cell inner membrane. The protein localises to the cytoplasm. It carries out the reaction ATP + H2O + cellular proteinSide 1 = ADP + phosphate + cellular proteinSide 2.. Functionally, part of the Sec protein translocase complex. Interacts with the SecYEG preprotein conducting channel. Has a central role in coupling the hydrolysis of ATP to the transfer of proteins into and across the cell membrane, serving both as a receptor for the preprotein-SecB complex and as an ATP-driven molecular motor driving the stepwise translocation of polypeptide chains across the membrane. This chain is Protein translocase subunit SecA, found in Halorhodospira halophila (strain DSM 244 / SL1) (Ectothiorhodospira halophila (strain DSM 244 / SL1)).